We begin with the raw amino-acid sequence, 408 residues long: Succinylornithine transaminase (408 aa).

An N6-(pyridoxal phosphate)lysine modification is found at Lys252.

Belongs to the class-III pyridoxal-phosphate-dependent aminotransferase family. AstC subfamily. Pyridoxal 5'-phosphate serves as cofactor.

The catalysed reaction is N(2)-succinyl-L-ornithine + 2-oxoglutarate = N-succinyl-L-glutamate 5-semialdehyde + L-glutamate. It participates in amino-acid degradation; L-arginine degradation via AST pathway; L-glutamate and succinate from L-arginine: step 3/5. Catalyzes the transamination of N(2)-succinylornithine and alpha-ketoglutarate into N(2)-succinylglutamate semialdehyde and glutamate. Can also act as an acetylornithine aminotransferase. In Salmonella newport (strain SL254), this protein is Succinylornithine transaminase.